The sequence spans 274 residues: 2,3,4,5-tetrahydropyridine-2,6-dicarboxylate N-succinyltransferase (274 aa).

Substrate-binding residues include arginine 105 and aspartate 142.

It belongs to the transferase hexapeptide repeat family. Homotrimer.

It is found in the cytoplasm. It carries out the reaction (S)-2,3,4,5-tetrahydrodipicolinate + succinyl-CoA + H2O = (S)-2-succinylamino-6-oxoheptanedioate + CoA. It functions in the pathway amino-acid biosynthesis; L-lysine biosynthesis via DAP pathway; LL-2,6-diaminopimelate from (S)-tetrahydrodipicolinate (succinylase route): step 1/3. This chain is 2,3,4,5-tetrahydropyridine-2,6-dicarboxylate N-succinyltransferase, found in Thiobacillus denitrificans (strain ATCC 25259 / T1).